A 475-amino-acid polypeptide reads, in one-letter code: Erythroid membrane-associated protein (475 aa).

An N-terminal signal peptide occupies residues 1–29; sequence MEMASSAGSWLSGCLIPLVFLRLSVHVSG. The Ig-like V-type domain maps to 30-140; that stretch reads HAGDAGKFHV…GNLSKEDTVI (111 aa). Residues 30-155 are Extracellular-facing; sequence HAGDAGKFHV…PSVGSLSPSA (126 aa). A disulfide bond links C50 and C126. N132 is a glycosylation site (N-linked (GlcNAc...) asparagine). The chain crosses the membrane as a helical span at residues 156–176; sequence VALAVILPVLVLLIMVCLCLI. The Cytoplasmic portion of the chain corresponds to 177–475; that stretch reads WKQRRAKEKL…ALQELKAPSF (299 aa). Residues 220–418 form the B30.2/SPRY domain; it reads KLKRAAANSG…LVICSELHKS (199 aa). S418 is subject to Phosphoserine.

The protein belongs to the immunoglobulin superfamily. BTN/MOG family. In terms of processing, glycosylated. As to expression, expressed in erythroid-enriched bone marrow (at protein level). Highly expressed in bone marrow and to a lower extent in leukocytes, thymus, lymph node and spleen.

It localises to the cell membrane. Its subcellular location is the cytoplasm. Functionally, possible role as a cell-adhesion or receptor molecule of erythroid cells. This Homo sapiens (Human) protein is Erythroid membrane-associated protein (ERMAP).